The sequence spans 348 residues: tRNA pseudouridine synthase D (348 aa).

Asp81 (nucleophile) is an active-site residue. The region spanning 158–304 (GVPNYFGAQR…MRHERRSIEL (147 aa)) is the TRUD domain.

Belongs to the pseudouridine synthase TruD family.

It catalyses the reaction uridine(13) in tRNA = pseudouridine(13) in tRNA. Responsible for synthesis of pseudouridine from uracil-13 in transfer RNAs. The chain is tRNA pseudouridine synthase D from Aliivibrio salmonicida (strain LFI1238) (Vibrio salmonicida (strain LFI1238)).